Reading from the N-terminus, the 354-residue chain is Rhodopsin (354 aa).

Residues 1–36 are Extracellular-facing; that stretch reads MNGTEGPAFYVPMSNATGVVRSPYEYPQYYLVAPWA. 2 N-linked (GlcNAc...) asparagine glycosylation sites follow: N2 and N15. Residues 37–61 form a helical membrane-spanning segment; the sequence is YGLLAAYMFFLIITGFPVNFLTLYV. Residues 62–73 lie on the Cytoplasmic side of the membrane; that stretch reads TIEHKKLRTPLN. Residues 74-96 form a helical membrane-spanning segment; it reads YILLNLAIADLFMVFGGFTTTMY. Topologically, residues 97–110 are extracellular; that stretch reads TSLHGYFVFGRLGC. C110 and C187 form a disulfide bridge. The helical transmembrane segment at 111 to 133 threads the bilayer; it reads NLEGFFATLGGEMGLWSLVVLAI. The 'Ionic lock' involved in activated form stabilization motif lies at 134–136; sequence ERW. The Cytoplasmic segment spans residues 134–152; it reads ERWMVVCKPVSNFRFGENH. The chain crosses the membrane as a helical span at residues 153–173; that stretch reads AIMGVAFTWVMACSCAVPPLV. The Extracellular segment spans residues 174–202; it reads GWSRYIPEGMQCSCGVDYYTRTPGVNNES. N200 carries an N-linked (GlcNAc...) asparagine glycan. The chain crosses the membrane as a helical span at residues 203–224; that stretch reads FVIYMFIVHFFIPLIVIFFCYG. Over 225 to 252 the chain is Cytoplasmic; that stretch reads RLVCTVKEAAAQQQESETTQRAEREVTR. A helical transmembrane segment spans residues 253–274; that stretch reads MVIIMVIAFLICWLPYAGVAWY. Over 275 to 286 the chain is Extracellular; it reads IFTHQGSEFGPV. Residues 287–308 form a helical membrane-spanning segment; the sequence is FMTLPAFFAKTSAVYNPCIYIC. Position 296 is an N6-(retinylidene)lysine (K296). The Cytoplasmic segment spans residues 309-354; that stretch reads MNKQFRHCMITTLCCGKNPFEEEEGASTTASKTEASSVSSSSVSPA. Residues 333–354 form a disordered region; it reads GASTTASKTEASSVSSSSVSPA. The span at 334–354 shows a compositional bias: low complexity; it reads ASTTASKTEASSVSSSSVSPA.

Belongs to the G-protein coupled receptor 1 family. Opsin subfamily. Phosphorylated on some or all of the serine and threonine residues present in the C-terminal region. Post-translationally, contains one covalently linked retinal chromophore. In terms of tissue distribution, retinal rod photoreceptor cells, predominantly in the outer segments (at protein level). Retinal rod photoreceptor cells.

The protein resides in the membrane. The protein localises to the cell projection. It localises to the cilium. It is found in the photoreceptor outer segment. Its function is as follows. Photoreceptor required for image-forming vision at low light intensity. While most salt water fish species use retinal as chromophore, most freshwater fish use 3-dehydroretinal, or a mixture of retinal and 3-dehydroretinal. Light-induced isomerization of 11-cis to all-trans retinal triggers a conformational change that activates signaling via G-proteins. Subsequent receptor phosphorylation mediates displacement of the bound G-protein alpha subunit by arrestin and terminates signaling. The polypeptide is Rhodopsin (rho) (Danio rerio (Zebrafish)).